We begin with the raw amino-acid sequence, 690 residues long: Long-chain fatty acid transport protein 5 (690 aa).

The Cytoplasmic segment spans residues 1–30 (MGVRQQLALLLLLLLLLWGLGQPVWPVAVA). A run of 2 helical transmembrane segments spans residues 31 to 51 (LTLRWLLGDPTCCVLLGLAML) and 56 to 76 (LGPWVPHGLSLAAAALALTLL). At 77 to 690 (PARLPPGLRW…QAVCEGTWRL (614 aa)) the chain is on the cytoplasmic side. Residue 292–303 (FIYTSGTTGLPK) participates in AMP binding. Ser-501 is subject to Phosphoserine.

This sequence belongs to the ATP-dependent AMP-binding enzyme family. Predominantly expressed in liver.

Its subcellular location is the endoplasmic reticulum membrane. It localises to the microsome. It is found in the cell membrane. It carries out the reaction a fatty acid(in) = a fatty acid(out). The catalysed reaction is cholate + ATP + CoA = choloyl-CoA + AMP + diphosphate. The enzyme catalyses chenodeoxycholate + ATP + CoA = chenodeoxycholoyl-CoA + AMP + diphosphate. It catalyses the reaction deoxycholate + ATP + CoA = deoxycholoyl-CoA + AMP + diphosphate. It carries out the reaction lithocholate + ATP + CoA = lithocholoyl-CoA + AMP + diphosphate. The catalysed reaction is (25R)-3alpha,7alpha,12alpha-trihydroxy-5beta-cholestan-26-oate + ATP + CoA = (25R)-3alpha,7alpha,12alpha-trihydroxy-5beta-cholestan-26-oyl-CoA + AMP + diphosphate. The enzyme catalyses a very long-chain fatty acid + ATP + CoA = a very long-chain fatty acyl-CoA + AMP + diphosphate. It catalyses the reaction tetracosanoate + ATP + CoA = tetracosanoyl-CoA + AMP + diphosphate. It carries out the reaction hexacosanoate + ATP + CoA = hexacosanoyl-CoA + AMP + diphosphate. The catalysed reaction is a long-chain fatty acid + ATP + CoA = a long-chain fatty acyl-CoA + AMP + diphosphate. The enzyme catalyses octadecanoate + ATP + CoA = octadecanoyl-CoA + AMP + diphosphate. It catalyses the reaction eicosanoate + ATP + CoA = eicosanoyl-CoA + AMP + diphosphate. Its activity is regulated as follows. 3-alpha,7-alpha,12-alpha-trihydroxy-5-beta-cholestanate (THCA) inhibits the activation of cholate. In terms of biological role, may mediate the import of long-chain fatty acids (LCFA) by facilitating their transport across cell membranes. Also catalyzes the ATP-dependent formation of fatty acyl-CoA using LCFA and very-long-chain fatty acids (VLCFA) as substrates. Mainly functions as a bile acyl-CoA synthetase catalyzing the activation of bile acids via ATP-dependent formation of bile acid CoA thioesters which is necessary for their subsequent conjugation with glycine or taurine. Both primary bile acids (cholic acid and chenodeoxycholic acid) and secondary bile acids (deoxycholic acid and lithocholic acid) are the principal substrates. In vitro, activates 3-alpha,7-alpha,12-alpha-trihydroxy-5-beta-cholestanate ((25R)-3alpha,7alpha,12alpha-trihydroxy-5beta-cholestan-26-oate or THCA), the C27 precursor of cholic acid deriving from the de novo synthesis from cholesterol. Plays an important role in hepatic fatty acid uptake and bile acid reconjugation and recycling but not in de novo synthesis of bile acids. The sequence is that of Long-chain fatty acid transport protein 5 (SLC27A5) from Homo sapiens (Human).